A 297-amino-acid polypeptide reads, in one-letter code: uncharacterized protein (297 aa).

A helical membrane pass occupies residues 191–211 (VMIILSCSNITILAVLSIVGL). Residues 275-287 (SKTSETQSVSGST) show a composition bias toward polar residues. The tract at residues 275–297 (SKTSETQSVSGSTHSDEKLTAPM) is disordered. The span at 288 to 297 (HSDEKLTAPM) shows a compositional bias: basic and acidic residues.

It localises to the host membrane. This is an uncharacterized protein from Cryphonectria parasitica mycoreovirus 1 (strain 9B21) (CpMYRV-1).